Here is a 121-residue protein sequence, read N- to C-terminus: Phosphoribosyl-ATP pyrophosphatase (121 aa).

The protein belongs to the PRA-PH family.

It is found in the cytoplasm. It carries out the reaction 1-(5-phospho-beta-D-ribosyl)-ATP + H2O = 1-(5-phospho-beta-D-ribosyl)-5'-AMP + diphosphate + H(+). The protein operates within amino-acid biosynthesis; L-histidine biosynthesis; L-histidine from 5-phospho-alpha-D-ribose 1-diphosphate: step 2/9. In Nitrosospira multiformis (strain ATCC 25196 / NCIMB 11849 / C 71), this protein is Phosphoribosyl-ATP pyrophosphatase.